A 281-amino-acid chain; its full sequence is Nuclear receptor-interacting protein 2 (281 aa).

The tract at residues 18-85 (ESCSTGQRQA…RAHLSQQRRL (68 aa)) is disordered. A compositionally biased stretch (pro residues) spans 36 to 47 (TPPPSSPWPTPP). Basic and acidic residues predominate over residues 55 to 78 (QEARRDEGEARTRGQEAQLRDRAH). The LXXLL motif signature appears at 244–248 (LQTLL).

As to quaternary structure, interacts with NR1F2, RARA and THRB in a ligand-dependent manner.

It is found in the nucleus. In terms of biological role, down-regulates transcriptional activation by nuclear receptors such as NR1F2. The protein is Nuclear receptor-interacting protein 2 (NRIP2) of Homo sapiens (Human).